Here is a 449-residue protein sequence, read N- to C-terminus: Phosphoglucosamine mutase (449 aa).

The Phosphoserine intermediate role is filled by S102. Mg(2+)-binding residues include S102, D241, D243, and D245. S102 bears the Phosphoserine mark.

The protein belongs to the phosphohexose mutase family. It depends on Mg(2+) as a cofactor. In terms of processing, activated by phosphorylation.

The catalysed reaction is alpha-D-glucosamine 1-phosphate = D-glucosamine 6-phosphate. Catalyzes the conversion of glucosamine-6-phosphate to glucosamine-1-phosphate. The chain is Phosphoglucosamine mutase from Pseudoalteromonas translucida (strain TAC 125).